The sequence spans 372 residues: 3-ketodihydrosphingosine reductase TSC10 (372 aa).

Residue Val-64 participates in NADP(+) binding. Gly-67, Ser-69, Gly-71, Arg-92, Lys-96, Asp-123, and Leu-124 together coordinate NADPH. Residues 67 to 71 carry the GXSXG motif; that stretch reads GGSQG. Asp-123 is an NADP(+) binding site. Ser-205 (proton donor) is an active-site residue. Residues Tyr-219, Lys-223, and Ser-254 each coordinate NADP(+). The active-site Proton acceptor is Tyr-219. The active-site Lowers pKa of active site Tyr is the Lys-223. Residues 321–341 form a helical membrane-spanning segment; that stretch reads LLQIPLAIFMCIFSPVWNAFV.

This sequence belongs to the short-chain dehydrogenases/reductases (SDR) family.

The protein localises to the endoplasmic reticulum membrane. It carries out the reaction sphinganine + NADP(+) = 3-oxosphinganine + NADPH + H(+). It participates in lipid metabolism; sphingolipid metabolism. In terms of biological role, catalyzes the reduction of 3'-oxosphinganine (3-ketodihydrosphingosine/KDS) to sphinganine (dihydrosphingosine/DHS), the second step of de novo sphingolipid biosynthesis. The chain is 3-ketodihydrosphingosine reductase TSC10 (TSC10) from Yarrowia lipolytica (strain CLIB 122 / E 150) (Yeast).